Reading from the N-terminus, the 612-residue chain is Serine/threonine-protein kinase Nek1 (612 aa).

The Protein kinase domain maps to 4-258; it reads YEFLEQIGKG…ASDLLRHPHL (255 aa). ATP-binding positions include 10 to 18 and K33; that span reads IGKGSFGSA. D129 acts as the Proton acceptor in catalysis. The span at 503–513 shows a compositional bias: polar residues; sequence ISDGSSSSDQN. Residues 503–534 form a disordered region; the sequence is ISDGSSSSDQNATAGASSHTTSSSSRRCRFDP. Residues 514 to 527 are compositionally biased toward low complexity; the sequence is ATAGASSHTTSSSS.

The protein belongs to the protein kinase superfamily. NEK Ser/Thr protein kinase family. NIMA subfamily.

It catalyses the reaction L-seryl-[protein] + ATP = O-phospho-L-seryl-[protein] + ADP + H(+). The enzyme catalyses L-threonyl-[protein] + ATP = O-phospho-L-threonyl-[protein] + ADP + H(+). In terms of biological role, may be involved in plant development processes. The sequence is that of Serine/threonine-protein kinase Nek1 (NEK1) from Arabidopsis thaliana (Mouse-ear cress).